Reading from the N-terminus, the 145-residue chain is Large ribosomal subunit protein uL13 (145 aa).

The protein belongs to the universal ribosomal protein uL13 family. As to quaternary structure, part of the 50S ribosomal subunit.

Functionally, this protein is one of the early assembly proteins of the 50S ribosomal subunit, although it is not seen to bind rRNA by itself. It is important during the early stages of 50S assembly. This Bacillus cytotoxicus (strain DSM 22905 / CIP 110041 / 391-98 / NVH 391-98) protein is Large ribosomal subunit protein uL13.